The following is a 198-amino-acid chain: NAD(P)H dehydrogenase (quinone) (198 aa).

A Flavodoxin-like domain is found at 4 to 189 (ILVLYYSMYG…AIARYQGEHV (186 aa)). FMN is bound by residues 10-15 (SMYGHI) and 78-80 (TRF). Y12 is an NAD(+) binding site. W98 is a binding site for substrate. FMN is bound by residues 113-118 (STGTGG) and H133.

Belongs to the WrbA family. FMN serves as cofactor.

It catalyses the reaction a quinone + NADH + H(+) = a quinol + NAD(+). The catalysed reaction is a quinone + NADPH + H(+) = a quinol + NADP(+). This chain is NAD(P)H dehydrogenase (quinone), found in Klebsiella pneumoniae (strain 342).